A 547-amino-acid polypeptide reads, in one-letter code: MPSPTERAAHRTPPAALGAFPDLFVDYCTDFDAVADFYPGDWQSRPARRAAATAAAKRPADREVLADTLLDQNERWGLDERTRSHIETLRDPDSIAVVTGQQVGLFTGPLYTIYKTITTLQLIEEWADQTGRPVVPVFWVEGEDHDFEEIAAAHVLQHNEVVPLSYEPGVDDNPGAVGRLALTDGIQDVVDRLDEALPPSDFKPAVMEQVRAAYQPGTRLEDAFARLMRSLFEDDGLVFMNPDDARLKALTRPLFRRDIEDPRASVAPVNAAGRALRDRGYHAQVNAHPTNLFWLGDDGRWAIDLEDENAFRLRGTDRTFSRSDLLNRLDETPERFSPNVVLRPLMQDHLLPTAAYVAGPGEVSYFAQYGGVYDWAGLDMPLIHPRASVSLVEGKVQKVLDKYGLTVADFRDGLEPLFQDVVVDTMEVDVDALFSEALPQLHQTLNALKPEVEAVDRTLGASTEATRSAIMDEMEALKQKVVRAEKRQQDEVRAQLKKAHTNLRPDGTLQERTINVLYYLNKYSPALLDDLRHALRTDTSAHQVVGV.

A coiled-coil region spans residues 461–504 (ASTEATRSAIMDEMEALKQKVVRAEKRQQDEVRAQLKKAHTNLR).

Belongs to the BshC family.

In Salinibacter ruber (strain DSM 13855 / M31), this protein is Putative cysteine ligase BshC.